The primary structure comprises 487 residues: Glutamyl-tRNA(Gln) amidotransferase subunit A (487 aa).

Residues lysine 79 and serine 158 each act as charge relay system in the active site. Residue serine 182 is the Acyl-ester intermediate of the active site.

It belongs to the amidase family. GatA subfamily. Heterotrimer of A, B and C subunits.

It carries out the reaction L-glutamyl-tRNA(Gln) + L-glutamine + ATP + H2O = L-glutaminyl-tRNA(Gln) + L-glutamate + ADP + phosphate + H(+). Functionally, allows the formation of correctly charged Gln-tRNA(Gln) through the transamidation of misacylated Glu-tRNA(Gln) in organisms which lack glutaminyl-tRNA synthetase. The reaction takes place in the presence of glutamine and ATP through an activated gamma-phospho-Glu-tRNA(Gln). This Ehrlichia ruminantium (strain Gardel) protein is Glutamyl-tRNA(Gln) amidotransferase subunit A.